The primary structure comprises 196 residues: UMP-CMP kinase (196 aa).

13 to 18 lines the ATP pocket; that stretch reads GAGKGT. The residue at position 33 (Ser-33) is a Phosphoserine. Residues 33-63 are NMP; it reads SAGELLRDERKNPDSQYGELIEKYIKEGKIV. Arg-39 lines the a ribonucleoside 5'-phosphate pocket. 2 positions are modified to N6-acetyllysine: Lys-43 and Lys-55. A ribonucleoside 5'-phosphate is bound at residue 61-63; that stretch reads KIV. Lys-73 is covalently cross-linked (Glycyl lysine isopeptide (Lys-Gly) (interchain with G-Cter in SUMO2)). Position 93-96 (93-96) interacts with a ribonucleoside 5'-phosphate; that stretch reads GFPR. Residue Asn-100 coordinates CMP. The residue at position 106 (Lys-106) is an N6-succinyllysine. Residues 133–143 are LID; that stretch reads ERGKSSGRSDD. Arg-134 serves as a coordination point for ATP. Residues Arg-140 and Arg-151 each contribute to the a ribonucleoside 5'-phosphate site. Residue Lys-179 coordinates ATP. Ser-180 bears the Phosphoserine mark.

Belongs to the adenylate kinase family. UMP-CMP kinase subfamily. Monomer. Mg(2+) serves as cofactor.

Its subcellular location is the nucleus. The protein localises to the cytoplasm. The enzyme catalyses CMP + ATP = CDP + ADP. It carries out the reaction dCMP + ATP = dCDP + ADP. The catalysed reaction is UMP + ATP = UDP + ADP. It catalyses the reaction a 2'-deoxyribonucleoside 5'-diphosphate + ATP = a 2'-deoxyribonucleoside 5'-triphosphate + ADP. The enzyme catalyses a ribonucleoside 5'-diphosphate + ATP = a ribonucleoside 5'-triphosphate + ADP. Catalyzes the phosphorylation of pyrimidine nucleoside monophosphates at the expense of ATP. Plays an important role in de novo pyrimidine nucleotide biosynthesis. Has preference for UMP and CMP as phosphate acceptors. Also displays broad nucleoside diphosphate kinase activity. In Rattus norvegicus (Rat), this protein is UMP-CMP kinase (Cmpk1).